The sequence spans 210 residues: Na(+)-translocating NADH-quinone reductase subunit D (210 aa).

Transmembrane regions (helical) follow at residues 42–62 (FVMT…ISLI), 72–92 (IIAQ…VLKA), 103–123 (VFVG…AYAM), 131–151 (FLDG…VATV), and 178–198 (NGLL…IWGV).

Belongs to the NqrDE/RnfAE family. As to quaternary structure, composed of six subunits; NqrA, NqrB, NqrC, NqrD, NqrE and NqrF.

Its subcellular location is the cell inner membrane. It catalyses the reaction a ubiquinone + n Na(+)(in) + NADH + H(+) = a ubiquinol + n Na(+)(out) + NAD(+). NQR complex catalyzes the reduction of ubiquinone-1 to ubiquinol by two successive reactions, coupled with the transport of Na(+) ions from the cytoplasm to the periplasm. NqrA to NqrE are probably involved in the second step, the conversion of ubisemiquinone to ubiquinol. The protein is Na(+)-translocating NADH-quinone reductase subunit D of Aeromonas salmonicida (strain A449).